Consider the following 254-residue polypeptide: Glucosamine-6-phosphate deaminase (254 aa).

Residue Asp-67 is the Proton acceptor; for enolization step of the active site. The For ring-opening step role is filled by Asn-136. His-138 functions as the Proton acceptor; for ring-opening step in the catalytic mechanism. Residue Glu-143 is the For ring-opening step of the active site.

This sequence belongs to the glucosamine/galactosamine-6-phosphate isomerase family. NagB subfamily.

The catalysed reaction is alpha-D-glucosamine 6-phosphate + H2O = beta-D-fructose 6-phosphate + NH4(+). The protein operates within amino-sugar metabolism; N-acetylneuraminate degradation; D-fructose 6-phosphate from N-acetylneuraminate: step 5/5. Catalyzes the reversible isomerization-deamination of glucosamine 6-phosphate (GlcN6P) to form fructose 6-phosphate (Fru6P) and ammonium ion. This chain is Glucosamine-6-phosphate deaminase, found in Brevibacillus brevis (strain 47 / JCM 6285 / NBRC 100599).